A 451-amino-acid polypeptide reads, in one-letter code: Sensor histidine kinase CssS (451 aa).

Over 1-9 (MKNKPLAFQ) the chain is Cytoplasmic. Residues 10 to 30 (IWVVISGILLAISILLLVLFS) form a helical membrane-spanning segment. Topologically, residues 31–165 (NTLRDFFTNE…RDDLAYTLFK (135 aa)) are extracellular. Residues 166–186 (QLLFIIAVVILLSWIPAIWLA) traverse the membrane as a helical segment. The 53-residue stretch at 187-239 (KYLSRPLVSFEKHVKRISEQDWDDPVKVDRKDEIGKLGHTIEEMRQKLVQKDE) folds into the HAMP domain. The Cytoplasmic segment spans residues 187 to 451 (KYLSRPLVSF…GVTYRIAVPK (265 aa)). A Histidine kinase domain is found at 247 to 451 (NISHDLKTPV…GVTYRIAVPK (205 aa)). His250 is modified (phosphohistidine; by autocatalysis).

The protein localises to the cell membrane. It catalyses the reaction ATP + protein L-histidine = ADP + protein N-phospho-L-histidine.. In terms of biological role, member of the two-component regulatory system CssS/CssR required to control the cellular response to secretion stress. Required for the transcription of htrA. Could detect misfolded proteins at the membrane-cell wall interface and then activate CssR by phosphorylation. This is Sensor histidine kinase CssS (cssS) from Bacillus subtilis (strain 168).